A 325-amino-acid chain; its full sequence is Elongation factor Ts, mitochondrial (325 aa).

The N-terminal 45 residues, 1-45 (MSLLRSLRVFLVARTGSYPAGSLLRQSPQPRHTFYAGPRLSASAS), are a transit peptide targeting the mitochondrion. N6-succinyllysine is present on residues Lys-76, Lys-133, and Lys-192. At Ser-270 the chain carries Phosphoserine. Position 324 is a phosphothreonine (Thr-324).

It belongs to the EF-Ts family. As to expression, expressed in all tissues, with the highest levels of expression in skeletal muscle, liver and kidney.

Its subcellular location is the mitochondrion. Its function is as follows. Associates with the EF-Tu.GDP complex and induces the exchange of GDP to GTP. It remains bound to the aminoacyl-tRNA.EF-Tu.GTP complex up to the GTP hydrolysis stage on the ribosome. This Homo sapiens (Human) protein is Elongation factor Ts, mitochondrial.